A 984-amino-acid chain; its full sequence is Ephrin type-B receptor 1 (984 aa).

The N-terminal stretch at 1–17 is a signal peptide; sequence MALDCLLLFLLASAVAA. Residues 18-540 lie on the Extracellular side of the membrane; sequence MEETLMDTRT…YKSELREQLP (523 aa). An Eph LBD domain is found at 19-201; that stretch reads EETLMDTRTA…FFKKCPSIVQ (183 aa). 2 consecutive Fibronectin type-III domains span residues 322–432 and 433–528; these read VPSG…TNQA and APST…TLTD. Residues Asn334, Asn426, and Asn480 are each glycosylated (N-linked (GlcNAc...) asparagine). Residues 541–563 form a helical membrane-spanning segment; it reads LIAGSAAAGVVFVVSLVAISIVC. The Cytoplasmic segment spans residues 564 to 984; that stretch reads SRKRAYSKEA…QMNQSPSVMA (421 aa). A Phosphotyrosine modification is found at Tyr600. Positions 619–882 constitute a Protein kinase domain; that stretch reads VKIEEVIGAG…EIVNTLDKMI (264 aa). Residues 625–633 and Lys651 contribute to the ATP site; that span reads IGAGEFGEV. Asp744 serves as the catalytic Proton acceptor. Residues 911–975 enclose the SAM domain; sequence TAFTTVDDWL…LSSIHSMRVQ (65 aa). Phosphotyrosine; by autocatalysis is present on Tyr928. The PDZ-binding motif lies at 982–984; it reads VMA.

This sequence belongs to the protein kinase superfamily. Tyr protein kinase family. Ephrin receptor subfamily. As to quaternary structure, heterotetramer upon binding of the ligand. The heterotetramer is composed of an ephrin dimer and a receptor dimer. Oligomerization is probably required to induce biological responses. Interacts with EPHB6; transphosphorylates EPHB6 to form an active signaling complex. Interacts with PICK1. Interacts (through Tyr-594) with NCK1 (via SH2 domain); activates the JUN cascade to regulate cell adhesion. The ligand-activated form interacts (through Tyr-928) with GRB7 and GRB10 (via SH2 domains). The ligand-activated form interacts (residues within the catalytic domain) with GRB2 (via SH2 domain). Interacts with GRB2, SHC1 and SRC; activates the MAPK/ERK cascade to regulate cell migration. Interacts with CBL; regulates receptor degradation through ubiquitination. Interacts with ACP1. Post-translationally, phosphorylated. Autophosphorylation is stimulated by the ligand EFNB1. Required for interaction with SH2 domain-containing interactors, for activation of the MAPK/ERK and JUN signaling cascades and for ubiquitination by CBL. Ubiquitinated; (EFNB1)ligand-induced poly- and/or multi-ubiquitination by CBL is regulated by SRC and leads to lysosomal degradation. As to expression, expressed in neural stem and progenitor cells in the dentate gyrus. Expressed in myogenic progenitor cells.

The protein localises to the cell membrane. It localises to the early endosome membrane. Its subcellular location is the cell projection. The protein resides in the dendrite. It carries out the reaction L-tyrosyl-[protein] + ATP = O-phospho-L-tyrosyl-[protein] + ADP + H(+). Receptor tyrosine kinase which binds promiscuously transmembrane ephrin-B family ligands residing on adjacent cells, leading to contact-dependent bidirectional signaling into neighboring cells. The signaling pathway downstream of the receptor is referred to as forward signaling while the signaling pathway downstream of the ephrin ligand is referred to as reverse signaling. Cognate/functional ephrin ligands for this receptor include EFNB1, EFNB2 and EFNB3. During nervous system development, regulates retinal axon guidance redirecting ipsilaterally ventrotemporal retinal ganglion cells axons at the optic chiasm midline. This probably requires repulsive interaction with EFNB2. In the adult nervous system together with EFNB3, regulates chemotaxis, proliferation and polarity of the hippocampus neural progenitors. In addition to its role in axon guidance also plays an important redundant role with other ephrin-B receptors in development and maturation of dendritic spines and synapse formation. May also regulate angiogenesis. More generally, may play a role in targeted cell migration and adhesion. Upon activation by EFNB1 and probably other ephrin-B ligands activates the MAPK/ERK and the JNK signaling cascades to regulate cell migration and adhesion respectively. Involved in the maintenance of the pool of satellite cells (muscle stem cells) by promoting their self-renewal and reducing their activation and differentiation. The polypeptide is Ephrin type-B receptor 1 (Ephb1) (Mus musculus (Mouse)).